A 160-amino-acid chain; its full sequence is Serine-protein kinase RsbW (160 aa).

The protein belongs to the anti-sigma-factor family.

It catalyses the reaction L-seryl-[protein] + ATP = O-phospho-L-seryl-[protein] + ADP + H(+). The enzyme catalyses L-threonyl-[protein] + ATP = O-phospho-L-threonyl-[protein] + ADP + H(+). Negative regulator of sigma-B activity. Phosphorylates and inactivates its specific antagonist protein, RsbV. Upon phosphorylation of RsbV, RsbW is released and binds to sigma-B, thereby blocking its ability to form an RNA polymerase holoenzyme (E-sigma-B). The sequence is that of Serine-protein kinase RsbW from Bacillus thuringiensis (strain Al Hakam).